Consider the following 230-residue polypeptide: All-trans retinoic acid-induced differentiation factor (230 aa).

A signal peptide spans 1–26 (MTANVTVSSMYLFTVLLLLFNVYVNS). At 27-200 (QDTDAQLCQM…YKCMRQGEFP (174 aa)) the chain is on the extracellular side. Residues 152–194 (QKNACNQTVQMPLVCPENSLCSPYGPGFFECSCLNNFHGYKCM) form the EGF-like domain. 3 disulfides stabilise this stretch: Cys156–Cys172, Cys166–Cys182, and Cys184–Cys193. A helical membrane pass occupies residues 201 to 221 (LVKVLGILTASTVVVSSVLWF). Over 222–230 (TQRRKVKNT) the chain is Cytoplasmic.

It is found in the nucleus envelope. The protein resides in the cell membrane. Its subcellular location is the lysosome membrane. Functionally, involved in osteoblast cell differentiation. May play a role in inducing the cell cycle arrest. This Danio rerio (Zebrafish) protein is All-trans retinoic acid-induced differentiation factor (atraid).